The sequence spans 184 residues: Oligoribonuclease (184 aa).

The Exonuclease domain occupies 7–170 (LIWIDLEMTG…DDIYESIEEL (164 aa)). Tyr-128 is an active-site residue.

Belongs to the oligoribonuclease family.

It localises to the cytoplasm. Functionally, 3'-to-5' exoribonuclease specific for small oligoribonucleotides. This chain is Oligoribonuclease, found in Hydrogenovibrio crunogenus (strain DSM 25203 / XCL-2) (Thiomicrospira crunogena).